The primary structure comprises 176 residues: Inorganic pyrophosphatase (176 aa).

The substrate site is built by K30, R44, and Y56. The Mg(2+) site is built by D66, D71, and D103. Y140 serves as a coordination point for substrate.

It belongs to the PPase family. Homohexamer. It depends on Mg(2+) as a cofactor.

It is found in the cytoplasm. It carries out the reaction diphosphate + H2O = 2 phosphate + H(+). Functionally, catalyzes the hydrolysis of inorganic pyrophosphate (PPi) forming two phosphate ions. This chain is Inorganic pyrophosphatase, found in Methanothermobacter thermautotrophicus (strain ATCC 29096 / DSM 1053 / JCM 10044 / NBRC 100330 / Delta H) (Methanobacterium thermoautotrophicum).